Reading from the N-terminus, the 435-residue chain is Eukaryotic translation initiation factor 3 subunit E (435 aa).

The PCI domain occupies 241–409; the sequence is TDMFFSPSYI…GTVIMNHPPQ (169 aa).

The protein belongs to the eIF-3 subunit E family. In terms of assembly, component of the eukaryotic translation initiation factor 3 (eIF-3) complex.

The protein localises to the cytoplasm. In terms of biological role, component of the eukaryotic translation initiation factor 3 (eIF-3) complex, which is involved in protein synthesis of a specialized repertoire of mRNAs and, together with other initiation factors, stimulates binding of mRNA and methionyl-tRNAi to the 40S ribosome. The eIF-3 complex specifically targets and initiates translation of a subset of mRNAs involved in cell proliferation. The polypeptide is Eukaryotic translation initiation factor 3 subunit E (Phaeosphaeria nodorum (strain SN15 / ATCC MYA-4574 / FGSC 10173) (Glume blotch fungus)).